We begin with the raw amino-acid sequence, 245 residues long: tRNA pseudouridine synthase A (245 aa).

The active-site Nucleophile is Asp52. Tyr111 is a binding site for substrate.

This sequence belongs to the tRNA pseudouridine synthase TruA family. Homodimer.

It carries out the reaction uridine(38/39/40) in tRNA = pseudouridine(38/39/40) in tRNA. Its function is as follows. Formation of pseudouridine at positions 38, 39 and 40 in the anticodon stem and loop of transfer RNAs. This is tRNA pseudouridine synthase A from Rickettsia peacockii (strain Rustic).